Here is a 218-residue protein sequence, read N- to C-terminus: DNA endonuclease I-ChuI (218 aa).

It belongs to the LAGLIDADG endonuclease family.

It localises to the plastid. The protein localises to the chloroplast. Probable endonuclease involved in intron homing. Encoded in the group-I intron of the subunit rRNA-encoding gene (rrnL), it generates a staggered cut with 4-nt (CTCG) 3'-OH overhangs 2 bp downstream from the intron insertion site. This Chlamydomonas applanata (Chlamydomonas humicola) protein is DNA endonuclease I-ChuI.